A 467-amino-acid polypeptide reads, in one-letter code: Mothers against decapentaplegic homolog 2 (467 aa).

An N-acetylserine modification is found at Ser2. The residue at position 8 (Thr8) is a Phosphothreonine. Positions 10-176 (PVVKRLLGWK…YQRVETPVLP (167 aa)) constitute an MH1 domain. Lys19 is subject to N6-acetyllysine. Cys74, Cys149, Cys161, and His166 together coordinate Zn(2+). Positions 207–217 (PAGIEPQSNYI) are enriched in polar residues. Residues 207–251 (PAGIEPQSNYIPETPPPGYISEDGETSDQQLNQSMDTGSPAELSP) are disordered. Phosphothreonine is present on Thr220. A PY-motif motif is present at residues 221–225 (PPPGY). The span at 233–243 (SDQQLNQSMDT) shows a compositional bias: polar residues. Ser240 is subject to Phosphoserine; by CAMK2. A phosphoserine mark is found at Ser245, Ser250, Ser255, Ser458, Ser460, and Ser464. Residues 274 to 467 (WCSIAYYELN…SPSVRCSSMS (194 aa)) form the MH2 domain. A phosphoserine; by TGFBR1 mark is found at Ser465 and Ser467.

It belongs to the dwarfin/SMAD family. In terms of assembly, monomer; in the absence of TGF-beta. Heterodimer; in the presence of TGF-beta. Forms a heterodimer with co-SMAD, SMAD4, in the nucleus to form the transactivation complex SMAD2/SMAD4. Found in a complex with SMAD3 and TRIM33 upon addition of TGF-beta. Identified in a complex that contains at least ZNF451, SMAD2, SMAD3 and SMAD4. Interacts (via the MH2 domain) with ZFYVE9; may form trimers with the SMAD4 co-SMAD. Interacts with TAZ/WWRT1. Interacts with FOXH1. Interacts with SNW1. Interacts with CREB-binding protein (CBP) and EP300. Interacts with SNON. Interacts with ALK4/ACVR1B. Interacts with SKOR1. Interacts with SKOR2. Interacts with PRDM16. Interacts (via MH2 domain) with LEMD3. Interacts with RBPMS. Interacts with WWP1. Interacts (dephosphorylated form, via the MH1 and MH2 domains) with RANBP3 (via its C-terminal R domain); the interaction results in the export of dephosphorylated SMAD3 out of the nucleus and termination of the TGF-beta signaling. Interacts with PDPK1 (via PH domain). Interacts with DAB2; the interactions are enhanced upon TGF-beta stimulation. Interacts with USP15. Interacts with PPP5C. Interacts with LDLRAD4 (via the SMAD interaction motif). Interacts (via MH2 domain) with PMEPA1 (via the SMAD interaction motif). Interacts with ZFHX3. Interacts with ZNF451. Interacts with SMURF2 when phosphorylated on Ser-465/467. Interacts with PPM1A. Interacts with TGF-beta. Interacts with TGFBR1. Interacts with TGIF. Interacts with SMAD3 and TRIM33. Interacts with ZNF580. Interacts with NEDD4L in response to TGF-beta. Interacts with HGS. Interacts with AIP1. Interacts with WWP1. Interacts with PML. Interacts weakly with ZNF8. Interacts (when phosphorylated) with RNF111; RNF111 acts as an enhancer of the transcriptional responses by mediating ubiquitination and degradation of SMAD2 inhibitors. Interacts with YAP1 (when phosphorylated at 'Ser-55'). Interacts when phosphorylated with IPO7; the interaction facilitates translocation of SMAD2 to the nucleus. Interacts with MTMR4; negatively regulates TGF-beta signaling through SMAD2 dephosphorylation and retention in endosomes. In terms of processing, in response to TGF-beta, phosphorylated on the C-terminal SXS motif by TGF-beta and activin type 1 receptor kinases, phosphorylation declines progressively in a KMT5A-dependent manner. Phosphorylation in this motif is required for interaction with a number of proteins including SMURF2, SNON and SMAD4 in response to TGF-beta. Dephosphorylated in this motif by PPM1A leading to disruption of the SMAD2/3-SMAD4 complex, nuclear export and termination of the TGF-beta signaling. In response to decorin, the naturally occurring inhibitor of TGF-beta signaling, phosphorylated on Ser-240 by CaMK2. Phosphorylated by MAPK3 upon EGF stimulation; which increases transcriptional activity and stability, and is blocked by calmodulin. Phosphorylated by PDPK1. Post-translationally, acetylated on Lys-19 by coactivators in response to TGF-beta signaling, which increases transcriptional activity. In response to TGF-beta, ubiquitinated by NEDD4L; which promotes its degradation. Monoubiquitinated, leading to prevent DNA-binding. Deubiquitination by USP15 alleviates inhibition and promotes activation of TGF-beta target genes. Ubiquitinated by RNF111, leading to its degradation: only SMAD2 proteins that are 'in use' are targeted by RNF111, RNF111 playing a key role in activating SMAD2 and regulating its turnover.

Its subcellular location is the cytoplasm. The protein localises to the nucleus. Functionally, receptor-regulated SMAD (R-SMAD) that is an intracellular signal transducer and transcriptional modulator activated by TGF-beta (transforming growth factor) and activin type 1 receptor kinases. Binds the TRE element in the promoter region of many genes that are regulated by TGF-beta and, on formation of the SMAD2/SMAD4 complex, activates transcription. Promotes TGFB1-mediated transcription of odontoblastic differentiation genes in dental papilla cells. Positively regulates PDPK1 kinase activity by stimulating its dissociation from the 14-3-3 protein YWHAQ which acts as a negative regulator. The protein is Mothers against decapentaplegic homolog 2 (SMAD2) of Bos taurus (Bovine).